Reading from the N-terminus, the 538-residue chain is Bifunctional purine biosynthesis protein PurH (538 aa).

The MGS-like domain occupies 8 to 158; sequence FPIPDLHRVR…KNHVYTGVIT (151 aa).

This sequence belongs to the PurH family.

It carries out the reaction (6R)-10-formyltetrahydrofolate + 5-amino-1-(5-phospho-beta-D-ribosyl)imidazole-4-carboxamide = 5-formamido-1-(5-phospho-D-ribosyl)imidazole-4-carboxamide + (6S)-5,6,7,8-tetrahydrofolate. The catalysed reaction is IMP + H2O = 5-formamido-1-(5-phospho-D-ribosyl)imidazole-4-carboxamide. It functions in the pathway purine metabolism; IMP biosynthesis via de novo pathway; 5-formamido-1-(5-phospho-D-ribosyl)imidazole-4-carboxamide from 5-amino-1-(5-phospho-D-ribosyl)imidazole-4-carboxamide (10-formyl THF route): step 1/1. Its pathway is purine metabolism; IMP biosynthesis via de novo pathway; IMP from 5-formamido-1-(5-phospho-D-ribosyl)imidazole-4-carboxamide: step 1/1. This is Bifunctional purine biosynthesis protein PurH from Bartonella henselae (strain ATCC 49882 / DSM 28221 / CCUG 30454 / Houston 1) (Rochalimaea henselae).